A 279-amino-acid chain; its full sequence is MAEPILSIEGVSFRYPNQSDYAVQNVSFTAERGEWLAIVGHNGSGKSTIARMLIGLLRPERGAIRLFGRLLNDATVWEVRRRVGLVFQNPDNQFVGATVEDDIAFALENNGIPRLEMVERIREAIRQVHMEPFLHYEPHRLSGGQKQRVAIAGILALRPDMIILDEATSMLDPRGREEVLETVRRLNRQQRITVLSITHDLEEAAKADRLIVMNKGEVMAEGTPEQIFRLGSKLERIGLDLPFAVKMGSRLREQGIPLRAGYFTTEELVEELWTLYSKK.

Residues 6–240 (LSIEGVSFRY…GSKLERIGLD (235 aa)) enclose the ABC transporter domain. 40–47 (GHNGSGKS) serves as a coordination point for ATP.

The protein belongs to the ABC transporter superfamily. Energy-coupling factor EcfA family. As to quaternary structure, forms a stable energy-coupling factor (ECF) transporter complex composed of 2 membrane-embedded substrate-binding proteins (S component), 2 ATP-binding proteins (A component) and 2 transmembrane proteins (T component).

The protein localises to the cell membrane. Its function is as follows. ATP-binding (A) component of a common energy-coupling factor (ECF) ABC-transporter complex. Unlike classic ABC transporters this ECF transporter provides the energy necessary to transport a number of different substrates. The polypeptide is Energy-coupling factor transporter ATP-binding protein EcfA1 (Geobacillus kaustophilus (strain HTA426)).